The sequence spans 116 residues: uncharacterized protein (116 aa).

Transmembrane regions (helical) follow at residues Ala5–Cys27, Pro42–Val64, and Val88–Ile110.

Its subcellular location is the cell membrane. This is an uncharacterized protein from Archaeoglobus fulgidus (strain ATCC 49558 / DSM 4304 / JCM 9628 / NBRC 100126 / VC-16).